The chain runs to 147 residues: Large ribosomal subunit protein uL13 (147 aa).

The protein belongs to the universal ribosomal protein uL13 family. As to quaternary structure, part of the 50S ribosomal subunit.

This protein is one of the early assembly proteins of the 50S ribosomal subunit, although it is not seen to bind rRNA by itself. It is important during the early stages of 50S assembly. The sequence is that of Large ribosomal subunit protein uL13 from Deinococcus geothermalis (strain DSM 11300 / CIP 105573 / AG-3a).